A 327-amino-acid chain; its full sequence is MEIKLIILSLALLLDRFVGDPPQLWQKVPHPVVLFGKAISWGEKRWNNRNLSASVLRRNGMWLTIGLVMACVVLGLVLELSLPFAGTAGAVAEILIVTVLLAQKSLADHVQAVALALREEGIEGGRRAVSMIVGRNPEHLDEGGVSRAAIESLAENASDGIVAPAFWFLVGGLPGLFAYKLINTADSMIGHLNDRYRDFGRFAAKLDDVANYIPARLTGLLASLATAITKDRLSGKEAFSVMRRDARLHRSPNAGWPESAFAGGLGLALAGPRQYGAEKVEGPMLNASGKRDANADDIDAALHLFWSTMSLMTGLVIAASLIGLLVG.

Helical transmembrane passes span 60 to 80 (GMWL…VLEL), 82 to 102 (LPFA…VLLA), 159 to 179 (DGIV…LFAY), and 304 to 324 (LFWS…LIGL).

Belongs to the CobD/CbiB family.

It localises to the cell membrane. The protein operates within cofactor biosynthesis; adenosylcobalamin biosynthesis. Functionally, converts cobyric acid to cobinamide by the addition of aminopropanol on the F carboxylic group. This Brucella anthropi (strain ATCC 49188 / DSM 6882 / CCUG 24695 / JCM 21032 / LMG 3331 / NBRC 15819 / NCTC 12168 / Alc 37) (Ochrobactrum anthropi) protein is Cobalamin biosynthesis protein CobD.